Consider the following 190-residue polypeptide: Iron-sulfur assembly protein 1 (190 aa).

The segment at 49 to 71 (PSLKPSAAGSGSTAPKPVTEREI) is disordered. Residues C116, C180, and C182 each coordinate Fe cation.

It belongs to the HesB/IscA family.

The protein resides in the mitochondrion matrix. Its function is as follows. Involved in the assembly of mitochondrial and cytoplasmic iron-sulfur proteins. Probably involved in the binding of an intermediate of Fe/S cluster assembly. In Schizosaccharomyces pombe (strain 972 / ATCC 24843) (Fission yeast), this protein is Iron-sulfur assembly protein 1 (isa1).